The chain runs to 347 residues: Haptoglobin (347 aa).

The first 18 residues, 1–18, serve as a signal peptide directing secretion; the sequence is MRALGAVVTLLLWGQLFA. One can recognise a Sushi domain in the interval 31 to 88; that stretch reads DSCPKPPEIANGYVEHLVRYRCRQFYRLRTEGDGVYTLNDEKQWVNTAAGEKLPECEA. Intrachain disulfides connect C52/C86, C90/C207, C250/C281, and C292/C322. The Peptidase S1 domain maps to 103-345; the sequence is IIGGSMDAKG…LKDWVQETMA (243 aa). N148, N182, N256, and N264 each carry an N-linked (GlcNAc...) asparagine glycan. The tract at residues 259–264 is interaction with CD163; the sequence is VPEKKN.

It belongs to the peptidase S1 family. Tetramer of two alpha and two beta chains; disulfide-linked. The hemoglobin/haptoglobin complex is composed of a haptoglobin dimer bound to two hemoglobin alpha-beta dimers. Interacts with CD163. Interacts with ERGIC3. As to expression, expressed by the liver and secreted in plasma.

The protein resides in the secreted. As a result of hemolysis, hemoglobin is found to accumulate in the kidney and is secreted in the urine. Haptoglobin captures, and combines with free plasma hemoglobin to allow hepatic recycling of heme iron and to prevent kidney damage. Haptoglobin also acts as an antioxidant, has antibacterial activity and plays a role in modulating many aspects of the acute phase response. Hemoglobin/haptoglobin complexes are rapidly cleared by the macrophage CD163 scavenger receptor expressed on the surface of liver Kupfer cells through an endocytic lysosomal degradation pathway. The protein is Haptoglobin (Hp) of Mus saxicola (Brown spiny mouse).